We begin with the raw amino-acid sequence, 259 residues long: Tryptophan synthase alpha chain (259 aa).

Active-site proton acceptor residues include Glu42 and Asp53.

This sequence belongs to the TrpA family. In terms of assembly, tetramer of two alpha and two beta chains.

The enzyme catalyses (1S,2R)-1-C-(indol-3-yl)glycerol 3-phosphate + L-serine = D-glyceraldehyde 3-phosphate + L-tryptophan + H2O. The protein operates within amino-acid biosynthesis; L-tryptophan biosynthesis; L-tryptophan from chorismate: step 5/5. The alpha subunit is responsible for the aldol cleavage of indoleglycerol phosphate to indole and glyceraldehyde 3-phosphate. The polypeptide is Tryptophan synthase alpha chain (Erythrobacter litoralis (strain HTCC2594)).